The following is a 541-amino-acid chain: Protein panoramix (541 aa).

The interaction with Piwi stretch occupies residues 1 to 169 (MEAPMKLEVK…TLVPDEQQSF (169 aa)). Disordered stretches follow at residues 52–75 (SDPE…LQPS) and 198–281 (TAEN…TELD). Residues 194–216 (MLEMTAENRKVKHKKKKHKKERS) are a coiled coil. Over residues 203-220 (KVKHKKKKHKKERSHRSN) the composition is skewed to basic residues. Composition is skewed to basic and acidic residues over residues 241–251 (DDKNQFDCDYR) and 269–279 (SSKERKLRDTE). The segment at 315 to 343 (LSKADKRSLAVARAELVLEQIQQKANKEE) is nxf2-interacting region (NIR). Residues 323-343 (LAVARAELVLEQIQQKANKEE) adopt a coiled-coil conformation. Residues 387–446 (TPGTRIDLSKWGLETVPEATKRLLRLLGIDVARLKELQSTVKPSQRILKLKKEQLEQGLA) form a necessary for interaction with nxf2 and protein stability region.

In the ovaries, part of a complex composed of at least Panx, nxf2, piwi and Nxt1. The complex is knowns as Panx-induced cotranscriptional silencing (PICTS) complex, Panx-nxf2-dependent TAP/p15 silencing (Pandas complex), SFiNX (silencing factor interacting nuclear export variant) or piwi-Panx-nxf2-p15 (PPNP) complex. Interacts (via NIR region) with nxf2 (via TAP-C domain); the interaction is direct. Expressed in female gonads (at protein level).

Its subcellular location is the nucleus. In terms of biological role, acts via the piwi-interacting RNA (piRNA) pathway which mediates the repression of transposable elements during meiosis by forming complexes composed of piRNAs and piwi proteins and governs the methylation and subsequent repression of transposons. Required for transcriptional silencing of transposons targeted by piwi and confers its effects by interacting with nascent RNA transcripts. Likely to be recruited to nascent transcripts cotranscriptionally by piwi and to recruit additional factors involved in transcriptional silencing. In the ovaries, forms a complex with nxf2, piwi and Nxt1 which acts as effectors of cotranscriptional transposon silencing. The interaction with nxf2 stabilizes the nuclear protein complex. The protein is Protein panoramix of Drosophila melanogaster (Fruit fly).